Consider the following 496-residue polypeptide: tRNA modification GTPase mss1, mitochondrial (496 aa).

The transit peptide at 1–19 directs the protein to the mitochondrion; that stretch reads MRILNRVFLNTFQACFRRF. The TrmE-type G domain occupies 239 to 416; it reads GINVAILGPS…FLQALSSTFE (178 aa). Residues 246–253, 293–297, and 363–366 each bind GTP; these read GPSNAGKS, DTAGL, and NKVD.

It belongs to the TRAFAC class TrmE-Era-EngA-EngB-Septin-like GTPase superfamily. TrmE GTPase family.

The protein resides in the mitochondrion. In terms of biological role, GTPase involved in the 5-carboxymethylaminomethyl modification (mnm(5)s(2)U34) of the wobble uridine base in mitochondrial tRNAs. The chain is tRNA modification GTPase mss1, mitochondrial (mss1) from Schizosaccharomyces pombe (strain 972 / ATCC 24843) (Fission yeast).